The primary structure comprises 710 residues: E3 ubiquitin-protein ligase TRIM9 (710 aa).

An RING-type zinc finger spans residues 10-50; sequence CPVCGSFYREPIILPCSHNLCQACARNILVQTPESESPQSH. A Phosphothreonine modification is found at threonine 41. 3 positions are modified to phosphoserine: serine 44, serine 46, and serine 49. 2 B box-type zinc fingers span residues 163 to 212 and 224 to 266; these read AAAL…LVPP and RKVS…VKAL. Positions 168, 171, 193, 198, 229, 232, 252, and 258 each coordinate Zn(2+). The stretch at 273–340 forms a coiled coil; that stretch reads HKSQLSQALN…KAQLLARVNK (68 aa). In terms of domain architecture, COS spans 374–432; it reads IKENDPSGFLQISDALIRRVHLTEDQWGKGTLTPRMTTDFDLSLDNSPLLQSIHQLDFV. Residues 440–535 enclose the Fibronectin type-III domain; sequence VPATPILQLE…KTLVLQTSEV (96 aa). The B30.2/SPRY domain maps to 533–702; sequence SEVAWFAFDP…LHTGLPVPDF (170 aa).

This sequence belongs to the TRIM/RBCC family. In terms of assembly, interacts with SNAP25. In terms of processing, auto-ubiquitinated. Poly-ubiquitinated in cultured cells, whereas it is monoubiquitinated in vitro. Brain. Highly expressed in the cerebral cortex (at protein level). Severely decreased in the affected brain areas in Parkinson disease and dementia with Lewy bodies.

The protein resides in the cytoplasm. The protein localises to the cell projection. Its subcellular location is the dendrite. It is found in the cytoplasmic vesicle. It localises to the secretory vesicle. The protein resides in the synaptic vesicle. The protein localises to the synapse. Its subcellular location is the cytoskeleton. The catalysed reaction is S-ubiquitinyl-[E2 ubiquitin-conjugating enzyme]-L-cysteine + [acceptor protein]-L-lysine = [E2 ubiquitin-conjugating enzyme]-L-cysteine + N(6)-ubiquitinyl-[acceptor protein]-L-lysine.. It functions in the pathway protein modification; protein ubiquitination. Functionally, E3 ubiquitin-protein ligase which ubiquitinates itself in cooperation with an E2 enzyme UBE2D2/UBC4 and serves as a targeting signal for proteasomal degradation. May play a role in regulation of neuronal functions and may also participate in the formation or breakdown of abnormal inclusions in neurodegenerative disorders. May act as a regulator of synaptic vesicle exocytosis by controlling the availability of SNAP25 for the SNARE complex formation. The chain is E3 ubiquitin-protein ligase TRIM9 (TRIM9) from Homo sapiens (Human).